Reading from the N-terminus, the 260-residue chain is Purine nucleoside phosphorylase XF_0940 (260 aa).

Zn(2+)-binding residues include His79, Cys120, and His137.

Belongs to the purine nucleoside phosphorylase YfiH/LACC1 family. In terms of assembly, homodimer. Requires Cu(2+) as cofactor. Zn(2+) serves as cofactor.

The catalysed reaction is adenosine + phosphate = alpha-D-ribose 1-phosphate + adenine. It catalyses the reaction S-methyl-5'-thioadenosine + phosphate = 5-(methylsulfanyl)-alpha-D-ribose 1-phosphate + adenine. The enzyme catalyses inosine + phosphate = alpha-D-ribose 1-phosphate + hypoxanthine. It carries out the reaction adenosine + H2O + H(+) = inosine + NH4(+). In terms of biological role, purine nucleoside enzyme that catalyzes the phosphorolysis of adenosine and inosine nucleosides, yielding D-ribose 1-phosphate and the respective free bases, adenine and hypoxanthine. Also catalyzes the phosphorolysis of S-methyl-5'-thioadenosine into adenine and S-methyl-5-thio-alpha-D-ribose 1-phosphate. Also has adenosine deaminase activity. The sequence is that of Purine nucleoside phosphorylase XF_0940 from Xylella fastidiosa (strain 9a5c).